Reading from the N-terminus, the 226-residue chain is Cytidylate kinase (226 aa).

10–18 (GPASSGKST) lines the ATP pocket.

This sequence belongs to the cytidylate kinase family. Type 1 subfamily.

Its subcellular location is the cytoplasm. The enzyme catalyses CMP + ATP = CDP + ADP. The catalysed reaction is dCMP + ATP = dCDP + ADP. The sequence is that of Cytidylate kinase from Streptococcus pyogenes serotype M5 (strain Manfredo).